The following is a 364-amino-acid chain: Aminomethyltransferase (364 aa).

Belongs to the GcvT family. As to quaternary structure, the glycine cleavage system is composed of four proteins: P, T, L and H.

It carries out the reaction N(6)-[(R)-S(8)-aminomethyldihydrolipoyl]-L-lysyl-[protein] + (6S)-5,6,7,8-tetrahydrofolate = N(6)-[(R)-dihydrolipoyl]-L-lysyl-[protein] + (6R)-5,10-methylene-5,6,7,8-tetrahydrofolate + NH4(+). The glycine cleavage system catalyzes the degradation of glycine. The polypeptide is Aminomethyltransferase (Escherichia coli O6:H1 (strain CFT073 / ATCC 700928 / UPEC)).